We begin with the raw amino-acid sequence, 347 residues long: NADH-quinone oxidoreductase subunit H (347 aa).

9 consecutive transmembrane segments (helical) span residues Ile13–Val33, Pro50–Phe70, Ala82–Val102, Val115–Gly135, Ile161–Val181, Phe198–Leu218, Cys263–Leu283, Val286–Val306, and Leu321–Leu341.

This sequence belongs to the complex I subunit 1 family. As to quaternary structure, NDH-1 is composed of 14 different subunits. Subunits NuoA, H, J, K, L, M, N constitute the membrane sector of the complex.

Its subcellular location is the cell inner membrane. It carries out the reaction a quinone + NADH + 5 H(+)(in) = a quinol + NAD(+) + 4 H(+)(out). NDH-1 shuttles electrons from NADH, via FMN and iron-sulfur (Fe-S) centers, to quinones in the respiratory chain. The immediate electron acceptor for the enzyme in this species is believed to be ubiquinone. Couples the redox reaction to proton translocation (for every two electrons transferred, four hydrogen ions are translocated across the cytoplasmic membrane), and thus conserves the redox energy in a proton gradient. This subunit may bind ubiquinone. The sequence is that of NADH-quinone oxidoreductase subunit H from Rhizobium leguminosarum bv. trifolii (strain WSM2304).